The following is a 67-amino-acid chain: Small ribosomal subunit protein bS21 (67 aa).

The protein belongs to the bacterial ribosomal protein bS21 family.

The protein is Small ribosomal subunit protein bS21 of Nitratidesulfovibrio vulgaris (strain DSM 19637 / Miyazaki F) (Desulfovibrio vulgaris).